A 566-amino-acid polypeptide reads, in one-letter code: Protein pacG (566 aa).

A DNA-binding region (NDT80) is located at residues 79 to 326; sequence TSFDPPPPAE…RSPRNFQSRK (248 aa). Disordered stretches follow at residues 314–422 and 448–470; these read VRGR…EAHR and DSRP…DSGR. The span at 333 to 349 shows a compositional bias: low complexity; it reads SAAASRKNAQAAAASNN. Composition is skewed to polar residues over residues 365 to 391, 403 to 413, and 452 to 466; these read VKSS…ATNS, HSSVYSQSSPE, and HTSF…SLSV.

Its subcellular location is the nucleus. It localises to the cytoplasm. Functionally, transcription factor that acts as a positive regulator of nonrepressible acid phosphatase activity. Is a major regulator of responses to nitrogen and carbon starvation and is essential for the expression of genes involved in vegetative incompatibility (like pin-c, het-6, and tol). Vegetative incompatibility is a non-self-recognition system ubiquitous in filamentous fungi which results in programmed cell death. The polypeptide is Protein pacG (pacG) (Emericella nidulans (strain FGSC A4 / ATCC 38163 / CBS 112.46 / NRRL 194 / M139) (Aspergillus nidulans)).